We begin with the raw amino-acid sequence, 268 residues long: Glucosamine-6-phosphate deaminase (268 aa).

D72 serves as the catalytic Proton acceptor; for enolization step. D141 (for ring-opening step) is an active-site residue. The active-site Proton acceptor; for ring-opening step is H143. E148 acts as the For ring-opening step in catalysis.

This sequence belongs to the glucosamine/galactosamine-6-phosphate isomerase family. NagB subfamily.

The catalysed reaction is alpha-D-glucosamine 6-phosphate + H2O = beta-D-fructose 6-phosphate + NH4(+). The protein operates within amino-sugar metabolism; N-acetylneuraminate degradation; D-fructose 6-phosphate from N-acetylneuraminate: step 5/5. Its activity is regulated as follows. Allosterically activated by N-acetylglucosamine 6-phosphate (GlcNAc6P). Its function is as follows. Catalyzes the reversible isomerization-deamination of glucosamine 6-phosphate (GlcN6P) to form fructose 6-phosphate (Fru6P) and ammonium ion. This is Glucosamine-6-phosphate deaminase from Borrelia garinii subsp. bavariensis (strain ATCC BAA-2496 / DSM 23469 / PBi) (Borreliella bavariensis).